The chain runs to 215 residues: uncharacterized protein (215 aa).

Active-site charge relay system residues include S114, D162, and H194.

Belongs to the AB hydrolase superfamily. AB hydrolase 2 family.

This is an uncharacterized protein from Rickettsia felis (strain ATCC VR-1525 / URRWXCal2) (Rickettsia azadi).